Consider the following 545-residue polypeptide: Cannabidiolic acid synthase-like 1 (545 aa).

A signal peptide spans 1–28 (MKCSTFCFWYVCKIIFFFLSFNIQISIA). Cysteines 37 and 99 form a disulfide. N-linked (GlcNAc...) asparagine glycans are attached at residues Asn45, Asn65, Asn89, and Asn168. The region spanning 77-251 (TTPKPLVIIT…AAWKIRLVAV (175 aa)) is the FAD-binding PCMH-type domain. The segment at residues 114–176 (HDAEGMSYIS…ENLSFPAGYC (63 aa)) is a cross-link (6-(S-cysteinyl)-8alpha-(pros-histidyl)-FAD (His-Cys)). Position 292 (His292) interacts with substrate. Asn297, Asn305, Asn329, and Asn361 each carry an N-linked (GlcNAc...) asparagine glycan. A substrate-binding site is contributed by Tyr417. Asn467 is a glycosylation site (N-linked (GlcNAc...) asparagine). Tyr484 functions as the Proton acceptor in the catalytic mechanism. Asn499 carries an N-linked (GlcNAc...) asparagine glycan.

The protein belongs to the oxygen-dependent FAD-linked oxidoreductase family. FAD is required as a cofactor. The FAD cofactor is bound via a bicovalent 6-S-cysteinyl, 8alpha-N1-histidyl FAD linkage.

It is found in the secreted. Functionally, has no cannabidiolic acid synthase activity. The polypeptide is Cannabidiolic acid synthase-like 1 (CBDAS2) (Cannabis sativa (Hemp)).